We begin with the raw amino-acid sequence, 198 residues long: IMP cyclohydrolase (198 aa).

It belongs to the archaeal IMP cyclohydrolase family.

It catalyses the reaction IMP + H2O = 5-formamido-1-(5-phospho-D-ribosyl)imidazole-4-carboxamide. It functions in the pathway purine metabolism; IMP biosynthesis via de novo pathway; IMP from 5-formamido-1-(5-phospho-D-ribosyl)imidazole-4-carboxamide: step 1/1. Functionally, catalyzes the cyclization of 5-formylamidoimidazole-4-carboxamide ribonucleotide to IMP. The protein is IMP cyclohydrolase of Methanopyrus kandleri (strain AV19 / DSM 6324 / JCM 9639 / NBRC 100938).